A 325-amino-acid polypeptide reads, in one-letter code: Aspartate carbamoyltransferase catalytic subunit (325 aa).

The carbamoyl phosphate site is built by arginine 55 and threonine 56. Lysine 83 serves as a coordination point for L-aspartate. Positions 105, 135, and 138 each coordinate carbamoyl phosphate. Residues arginine 176 and arginine 230 each coordinate L-aspartate. Carbamoyl phosphate is bound by residues glycine 271 and proline 272.

It belongs to the aspartate/ornithine carbamoyltransferase superfamily. ATCase family. In terms of assembly, heterododecamer (2C3:3R2) of six catalytic PyrB chains organized as two trimers (C3), and six regulatory PyrI chains organized as three dimers (R2).

It catalyses the reaction carbamoyl phosphate + L-aspartate = N-carbamoyl-L-aspartate + phosphate + H(+). It functions in the pathway pyrimidine metabolism; UMP biosynthesis via de novo pathway; (S)-dihydroorotate from bicarbonate: step 2/3. Functionally, catalyzes the condensation of carbamoyl phosphate and aspartate to form carbamoyl aspartate and inorganic phosphate, the committed step in the de novo pyrimidine nucleotide biosynthesis pathway. This Streptomyces avermitilis (strain ATCC 31267 / DSM 46492 / JCM 5070 / NBRC 14893 / NCIMB 12804 / NRRL 8165 / MA-4680) protein is Aspartate carbamoyltransferase catalytic subunit.